The primary structure comprises 493 residues: Cytochrome P450 2E1 (493 aa).

298-303 is a binding site for substrate; that stretch reads FAGTET. Position 437 (C437) interacts with heme.

The protein belongs to the cytochrome P450 family. As to quaternary structure, interacts with chaperones HSP70 and HSP90; this interaction is required for initial targeting to mitochondria. Requires heme as cofactor. Highest level in the liver and to a lesser extent in the kidney, with a higher level in the male kidney than in the female.

The protein resides in the endoplasmic reticulum membrane. Its subcellular location is the microsome membrane. It localises to the mitochondrion inner membrane. It catalyses the reaction an organic molecule + reduced [NADPH--hemoprotein reductase] + O2 = an alcohol + oxidized [NADPH--hemoprotein reductase] + H2O + H(+). It carries out the reaction (5Z,8Z,11Z)-eicosatrienoate + reduced [NADPH--hemoprotein reductase] + O2 = 19-hydroxy-(5Z,8Z,11Z)-eicosatrienoate + oxidized [NADPH--hemoprotein reductase] + H2O + H(+). The enzyme catalyses (5Z,8Z,11Z,14Z,17Z)-eicosapentaenoate + reduced [NADPH--hemoprotein reductase] + O2 = 19-hydroxy-(5Z,8Z,11Z,14Z,17Z)-eicosapentaenoate + oxidized [NADPH--hemoprotein reductase] + H2O + H(+). The catalysed reaction is (4Z,7Z,10Z,13Z,16Z,19Z)-docosahexaenoate + reduced [NADPH--hemoprotein reductase] + O2 = 21-hydroxy-(4Z,7Z,10Z,13Z,16Z,19Z)-docosahexaenoate + oxidized [NADPH--hemoprotein reductase] + H2O + H(+). It catalyses the reaction dodecanoate + reduced [NADPH--hemoprotein reductase] + O2 = 11-hydroxydodecanoate + oxidized [NADPH--hemoprotein reductase] + H2O + H(+). It carries out the reaction tetradecanoate + reduced [NADPH--hemoprotein reductase] + O2 = 13-hydroxytetradecanoate + oxidized [NADPH--hemoprotein reductase] + H2O + H(+). The enzyme catalyses 4-nitrophenol + NADPH + O2 + H(+) = 4-nitrocatechol + NADP(+) + H2O. The protein operates within lipid metabolism; fatty acid metabolism. With respect to regulation, the omega-1 hydroxylase activity is stimulated by cytochrome b5. Its function is as follows. A cytochrome P450 monooxygenase involved in the metabolism of fatty acids. Mechanistically, uses molecular oxygen inserting one oxygen atom into a substrate, and reducing the second into a water molecule, with two electrons provided by NADPH via cytochrome P450 reductase (NADPH--hemoprotein reductase). Catalyzes the hydroxylation of carbon-hydrogen bonds. Hydroxylates fatty acids specifically at the omega-1 position displaying the highest catalytic activity for saturated fatty acids. May be involved in the oxidative metabolism of xenobiotics. The polypeptide is Cytochrome P450 2E1 (Cyp2e1) (Mus musculus (Mouse)).